The sequence spans 217 residues: Probable transaldolase (217 aa).

K83 (schiff-base intermediate with substrate) is an active-site residue.

Belongs to the transaldolase family. Type 3B subfamily.

It is found in the cytoplasm. The enzyme catalyses D-sedoheptulose 7-phosphate + D-glyceraldehyde 3-phosphate = D-erythrose 4-phosphate + beta-D-fructose 6-phosphate. The protein operates within carbohydrate degradation; pentose phosphate pathway; D-glyceraldehyde 3-phosphate and beta-D-fructose 6-phosphate from D-ribose 5-phosphate and D-xylulose 5-phosphate (non-oxidative stage): step 2/3. Transaldolase is important for the balance of metabolites in the pentose-phosphate pathway. The protein is Probable transaldolase of Brucella abortus (strain S19).